A 193-amino-acid chain; its full sequence is T-cell receptor-associated transmembrane adapter 1 (193 aa).

The Extracellular segment spans residues 1–10; that stretch reads MSGNAECHFS. A helical; Signal-anchor for type III membrane protein transmembrane segment spans residues 11–31; sequence IWAILAFLGLALTISLIFNIF. Residues 32–193 are Cytoplasmic-facing; that stretch reads HCVEKQRQEK…LHSLDYDLAQ (162 aa). Phosphoserine is present on S46. The residue at position 80 (Y80) is a Phosphotyrosine. An interaction with PIK3R1 region spans residues 80–83; that stretch reads YEQM. Residues 116-166 form a disordered region; that stretch reads NEGKRRKPRKQKSHLSDKDEEGQMHAKDISLSKTTLVDSYPPESEAIEENI. Basic residues predominate over residues 119–128; the sequence is KRRKPRKQKS. Residues 129 to 145 are compositionally biased toward basic and acidic residues; it reads HLSDKDEEGQMHAKDIS.

Homodimer; disulfide-linked. Interacts with CD3Z. When phosphorylated, interacts with PIK3R1. Post-translationally, phosphorylated on tyrosines upon TCR activation.

It localises to the cell membrane. Functionally, stabilizes the TCR (T-cell antigen receptor)/CD3 complex at the surface of T-cells. This is T-cell receptor-associated transmembrane adapter 1 (TRAT1) from Bos taurus (Bovine).